The sequence spans 305 residues: Serine/threonine-protein phosphatase PP1-delta (305 aa).

Residues aspartate 62, histidine 64, aspartate 90, and asparagine 122 each contribute to the Mn(2+) site. The Proton donor role is filled by histidine 123. Mn(2+) is bound by residues histidine 172 and histidine 247.

This sequence belongs to the PPP phosphatase family. As to expression, expressed in male germline including spermatocytes, spermatids and spermatozoa.

The protein resides in the chromosome. The protein localises to the cell projection. It localises to the pseudopodium. Its subcellular location is the cytoplasm. It catalyses the reaction O-phospho-L-seryl-[protein] + H2O = L-seryl-[protein] + phosphate. It carries out the reaction O-phospho-L-threonyl-[protein] + H2O = L-threonyl-[protein] + phosphate. Functionally, probable phosphatase which plays a redundant role with gsp-4 in spermatogenesis by regulating sister chromatid segregation during meiosis. In addition, involved in sperm motility by controlling the dynamic disassembly of major sperm proteins (MSP) in the spermatozoan pseudopodium. This is Serine/threonine-protein phosphatase PP1-delta from Caenorhabditis elegans.